Consider the following 1052-residue polypeptide: 3-hydroxy-3-methylglutaryl coenzyme A reductase mokG (1052 aa).

Transmembrane regions (helical) follow at residues 223–243 (VDMAIIGLGYLALNMTLVSLF), 253–273 (FWLAASVLLSGAFAFVFGLGV), 279–299 (VPVDMLLLSEGIPFLVLTVGF), 349–369 (GWSIVQSYLLEIGALALGAVF), 378–398 (FCFLAAWMVLFDAILLFTFYA), and 440–460 (WKLIMVGGFVLFNVLQLSSFF). Residues 224–403 (DMAIIGLGYL…FTFYATILCV (180 aa)) form the SSD domain. A linker region spans residues 461-617 (YRIMGGFMTN…FKANQAESLT (157 aa)). A disordered region spans residues 571-594 (APKESAAPAPPSSPASVPSAVPVP). Residues 584–594 (PASVPSAVPVP) show a composition bias toward low complexity. The interval 618–1044 (DDELAELCLR…LVNAHMRHNR (427 aa)) is catalytic. Residue Glu-734 is the Charge relay system of the active site. Asn-798 carries an N-linked (GlcNAc...) asparagine glycan. Catalysis depends on charge relay system residues Lys-867 and Asp-943. His-1039 acts as the Proton donor in catalysis. Residue Asn-1043 is glycosylated (N-linked (GlcNAc...) asparagine).

The protein belongs to the HMG-CoA reductase family.

The protein localises to the endoplasmic reticulum membrane. The enzyme catalyses (R)-mevalonate + 2 NADP(+) + CoA = (3S)-3-hydroxy-3-methylglutaryl-CoA + 2 NADPH + 2 H(+). The protein operates within polyketide biosynthesis; lovastatin biosynthesis. In terms of biological role, HMG-CoA reductase; part of the gene cluster that mediates the biosynthesis of monakolin K, also known as lovastatin, and which acts as a potent competitive inhibitor of HMG-CoA reductase. Monakolin K biosynthesis is performed in two stages. The first stage is catalyzed by the nonaketide synthase mokA, which belongs to type I polyketide synthases and catalyzes the iterative nine-step formation of the polyketide. This PKS stage is completed by the action of dehydrogenase mokE, which catalyzes the NADPH-dependent reduction of the unsaturated tetra-, penta- and heptaketide intermediates that arise during the mokA-mediated biosynthesis of the nonaketide chain and leads to dihydromonacolin L. Covalently bound dihydromonacolin L is released from mokA by the mokD esterase. Conversion of dihydromonacolin L into monacolin L and then monacolin J is subsequently performed with the participation of molecular oxygen and P450 monoogygenase mokC. Finally, mokF performs the conversion of monacoline J to monacoline K through the addition of the side-chain diketide moiety (2R)-2-methylbutanoate produced by the diketide synthase mokB. HMG-CoA reductase mokG may act as a down-regulator of monacolin K production. This chain is 3-hydroxy-3-methylglutaryl coenzyme A reductase mokG, found in Monascus pilosus (Red mold).